The chain runs to 351 residues: Soluble interferon alpha/beta receptor OPG204 (351 aa).

The N-terminal stretch at 1–23 (MKMKMMVRIYFVSLSLLLFHSYA) is a signal peptide. Ig-like C2-type domains lie at 65 to 137 (LGEP…KNGD) and 155 to 237 (PKTY…IVVS). Disulfide bonds link cysteine 73–cysteine 129 and cysteine 172–cysteine 221. N-linked (GlcNAc...) asparagine; by host glycans are attached at residues asparagine 117, asparagine 182, asparagine 261, asparagine 269, and asparagine 321. The 100-residue stretch at 246 to 345 (PSQDHRFKLI…HNYYFDKTLT (100 aa)) folds into the Ig-like V-type domain. The cysteines at positions 272 and 333 are disulfide-linked.

The protein belongs to the interleukin-1 receptor family. In terms of assembly, interacts with host IFNA1.

The protein resides in the secreted. Its function is as follows. Counteracts the antiviral effects of host IFN-alpha/beta and key IFN-inducible proteins involved in viral RNA degradation suxh as host OAS1. Acts as a soluble IFN-alpha receptor and thus inhibits the interaction between host IFN-alpha and its receptor. The polypeptide is Soluble interferon alpha/beta receptor OPG204 (OPG204) (Cynomys gunnisoni (Gunnison's prairie dog)).